A 307-amino-acid chain; its full sequence is Transcription factor DIVARICATA (307 aa).

In terms of domain architecture, SANT spans 21-74 (RSTTRWTAAENKAFENALAVFDENTPNRWERVAERVPGKTVGDVMRQYKELEDD). The disordered stretch occupies residues 109 to 133 (QSYGTGGRKSSSGRPSEQERKKGVP). A compositionally biased stretch (basic and acidic residues) spans 124-133 (SEQERKKGVP). One can recognise an HTH myb-type domain in the interval 126–182 (QERKKGVPWTEEEHKLFLMGLKKYGKGDWRNISRNFVITRTPTQVASHAQKYFIRQL). The segment at residues 154 to 178 (WRNISRNFVITRTPTQVASHAQKYF) is a DNA-binding region (H-T-H motif). 2 stretches are compositionally biased toward polar residues: residues 196–206 (ITTVNLSDNQT) and 222–231 (MAQQQTSSTS). Residues 196–231 (ITTVNLSDNQTPSPDNKKPPSSPDHSMAQQQTSSTS) form a disordered region.

It localises to the nucleus. In terms of biological role, involved in the dorsovental asymmetry of flowers. Promotes ventral identity. This is Transcription factor DIVARICATA (DIVARICATA) from Antirrhinum majus (Garden snapdragon).